We begin with the raw amino-acid sequence, 110 residues long: Parvalbumin alpha (110 aa).

Serine 2 is modified (N-acetylserine). Residues serine 2 and serine 24 each carry the phosphoserine modification. 2 consecutive EF-hand domains span residues 39-74 (KSPE…FSPD) and 78-110 (LSVK…VAES). The Ca(2+) site is built by aspartate 52, aspartate 54, serine 56, phenylalanine 58, glutamate 60, glutamate 63, aspartate 91, aspartate 93, aspartate 95, lysine 97, and glutamate 102.

Belongs to the parvalbumin family.

In terms of biological role, in muscle, parvalbumin is thought to be involved in relaxation after contraction. It binds two calcium ions. The polypeptide is Parvalbumin alpha (PVALB) (Bos taurus (Bovine)).